Reading from the N-terminus, the 421-residue chain is Probable UDP-arabinose 4-epimerase 1 (421 aa).

At 1 to 33 (MLPTNRNRPQQRPARSWYFISDMDFSDPKRKPR) the chain is on the cytoplasmic side. A helical; Signal-anchor for type II membrane protein membrane pass occupies residues 34–53 (YLSKILMVALLTAMCVVMLT). The Lumenal segment spans residues 54–421 (QPPCHRRTPS…GYGPPQAMVL (368 aa)). An NAD(+)-binding site is contributed by 74–105 (HVLVTGGAGYIGSHAALRLLKDSFRVTIVDNL). Tyr-222 functions as the Proton acceptor in the catalytic mechanism.

The protein belongs to the NAD(P)-dependent epimerase/dehydratase family. NAD(+) is required as a cofactor.

The protein resides in the golgi apparatus. It is found in the golgi stack membrane. The enzyme catalyses UDP-beta-L-arabinopyranose = UDP-alpha-D-xylose. Its pathway is nucleotide-sugar biosynthesis; UDP-L-arabinose biosynthesis; UDP-L-arabinose from UDP-alpha-D-xylose: step 1/1. It functions in the pathway cell wall biogenesis; cell wall polysaccharide biosynthesis. The sequence is that of Probable UDP-arabinose 4-epimerase 1 (UEL-1) from Oryza sativa subsp. japonica (Rice).